Here is a 507-residue protein sequence, read N- to C-terminus: Iroquois-class homeodomain protein IRX-3 (507 aa).

The interval 19–39 (RPGAAGGGGGGSSAGGRSGPG) is disordered. Gly residues predominate over residues 22-39 (AAGGGGGGSSAGGRSGPG). Positions 130 to 192 (DPSRPKNATR…NARRRLKKEN (63 aa)) form a DNA-binding region, homeobox; TALE-type. 2 disordered regions span residues 193–398 (KMTW…AAAA) and 416–468 (RPFP…SGTD). 2 stretches are compositionally biased toward acidic residues: residues 213 to 223 (REEEDEEEDEE) and 230 to 261 (EMEE…DLEN). Pro residues-rich tracts occupy residues 314 to 342 (APPP…PAPA) and 418 to 428 (FPGPPAGPRPH). Phosphoserine occurs at positions 326 and 329. Low complexity predominate over residues 436 to 460 (APQHLLGLPGAAGHPAAAAAAYARP).

This sequence belongs to the TALE/IRO homeobox family. In terms of tissue distribution, expressed by neural progenitor cells in discrete domains of the ventral neural tube. Also expressed in specific and overlapping patterns with Irx1 and Irx2 in the developing and adult metanephric kidney. In the adult metanephros, renal expression is confined to the S3 segment of the proximal tubule, in the loop of Henle.

The protein localises to the nucleus. Functionally, transcription factor involved in SHH-dependent neural patterning. Together with NKX2-2 and NKX6-1 acts to restrict the generation of motor neurons to the appropriate region of the neural tube. Belongs to the class I proteins of neuronal progenitor factors, which are repressed by SHH signals. Involved in the transcriptional repression of MNX1 in non-motor neuron cells. Acts as a regulator of energy metabolism. This chain is Iroquois-class homeodomain protein IRX-3 (Irx3), found in Mus musculus (Mouse).